Here is a 475-residue protein sequence, read N- to C-terminus: MSPKTETKASVGFKAGVKDYRLTYYTPEYQTKDTDILAAFRVTPQPGVPPEEAGAAVAAESSTGTWTTVWTDGLTSLDRYKGRCYDIEPVPGEESQFIAYVAYPLDLFEEGSVTNLFTSIVGNVFGFKALRALRLEDLRIPPAYSKTFQGPPHGIQVERDKLNKYGRPLLGCTIKPKLGLSAKNYGRAVYECLRGGLDFTKDDENVNSQPFMRWRDRFVFCAEALYKAQAETGEIKGHYLNATAGTCEEMMKRAVFARELGVPIVMHDYLTGGFTANTTLAHYCRDNGLLLHIHRAMHAVIDRQRNHGMHFRVLAKALRMSGGDHIHAGTVVGKLEGEREVTLGFVDLLRDNYIEKDRSRGIYFTQDWVSMPGVLPVASGGIHVWHMPALTEIFGDDSVLQFGGGTLGHPWGNAPGAVANRVALEACVQARNEGRDLAREGNEVVREACKWSPELAAACEVWKEIKFEFDTIDYL.

A propeptide spanning residues 1–2 is cleaved from the precursor; sequence MS. N-acetylproline is present on P3. K14 carries the N6,N6,N6-trimethyllysine modification. Substrate is bound by residues N123 and T173. The Proton acceptor role is filled by K175. Position 177 (K177) interacts with substrate. 3 residues coordinate Mg(2+): K201, D203, and E204. K201 bears the N6-carboxylysine mark. H294 serves as the catalytic Proton acceptor. Positions 295, 327, and 379 each coordinate substrate.

This sequence belongs to the RuBisCO large chain family. Type I subfamily. In terms of assembly, heterohexadecamer of 8 large chains and 8 small chains; disulfide-linked. The disulfide link is formed within the large subunit homodimers. Requires Mg(2+) as cofactor. In terms of processing, the disulfide bond which can form in the large chain dimeric partners within the hexadecamer appears to be associated with oxidative stress and protein turnover.

The protein localises to the plastid. The protein resides in the chloroplast. It carries out the reaction 2 (2R)-3-phosphoglycerate + 2 H(+) = D-ribulose 1,5-bisphosphate + CO2 + H2O. It catalyses the reaction D-ribulose 1,5-bisphosphate + O2 = 2-phosphoglycolate + (2R)-3-phosphoglycerate + 2 H(+). In terms of biological role, ruBisCO catalyzes two reactions: the carboxylation of D-ribulose 1,5-bisphosphate, the primary event in carbon dioxide fixation, as well as the oxidative fragmentation of the pentose substrate in the photorespiration process. Both reactions occur simultaneously and in competition at the same active site. This is Ribulose bisphosphate carboxylase large chain from Tsuga heterophylla (Western hemlock).